The sequence spans 155 residues: 3-hydroxyacyl-[acyl-carrier-protein] dehydratase FabZ (155 aa).

Histidine 54 is a catalytic residue.

The protein belongs to the thioester dehydratase family. FabZ subfamily.

Its subcellular location is the cytoplasm. It carries out the reaction a (3R)-hydroxyacyl-[ACP] = a (2E)-enoyl-[ACP] + H2O. Functionally, involved in unsaturated fatty acids biosynthesis. Catalyzes the dehydration of short chain beta-hydroxyacyl-ACPs and long chain saturated and unsaturated beta-hydroxyacyl-ACPs. The chain is 3-hydroxyacyl-[acyl-carrier-protein] dehydratase FabZ from Burkholderia ambifaria (strain MC40-6).